Here is a 168-residue protein sequence, read N- to C-terminus: Crossover junction endodeoxyribonuclease RuvC (168 aa).

Active-site residues include Asp-10, Glu-70, and Asp-143. 3 residues coordinate Mg(2+): Asp-10, Glu-70, and Asp-143.

This sequence belongs to the RuvC family. Homodimer which binds Holliday junction (HJ) DNA. The HJ becomes 2-fold symmetrical on binding to RuvC with unstacked arms; it has a different conformation from HJ DNA in complex with RuvA. In the full resolvosome a probable DNA-RuvA(4)-RuvB(12)-RuvC(2) complex forms which resolves the HJ. It depends on Mg(2+) as a cofactor.

It localises to the cytoplasm. It catalyses the reaction Endonucleolytic cleavage at a junction such as a reciprocal single-stranded crossover between two homologous DNA duplexes (Holliday junction).. Its function is as follows. The RuvA-RuvB-RuvC complex processes Holliday junction (HJ) DNA during genetic recombination and DNA repair. Endonuclease that resolves HJ intermediates. Cleaves cruciform DNA by making single-stranded nicks across the HJ at symmetrical positions within the homologous arms, yielding a 5'-phosphate and a 3'-hydroxyl group; requires a central core of homology in the junction. The consensus cleavage sequence is 5'-(A/T)TT(C/G)-3'. Cleavage occurs on the 3'-side of the TT dinucleotide at the point of strand exchange. HJ branch migration catalyzed by RuvA-RuvB allows RuvC to scan DNA until it finds its consensus sequence, where it cleaves and resolves the cruciform DNA. The chain is Crossover junction endodeoxyribonuclease RuvC from Thermotoga maritima (strain ATCC 43589 / DSM 3109 / JCM 10099 / NBRC 100826 / MSB8).